A 414-amino-acid chain; its full sequence is Phosphoglycerate kinase (414 aa).

(2R)-3-phosphoglycerate contacts are provided by valine 23, aspartate 24, phenylalanine 25, asparagine 26, arginine 39, serine 62, histidine 63, glycine 65, and arginine 66. Tyrosine 75 carries the phosphotyrosine modification. Serine 76 is modified (phosphoserine). Residues leucine 121 and arginine 122 each contribute to the (2R)-3-phosphoglycerate site. Serine 143 bears the Phosphoserine mark. Residues histidine 168 and arginine 169 each contribute to the (2R)-3-phosphoglycerate site. 3 positions are modified to phosphoserine: serine 172, serine 173, and serine 183. Glycine 211 contacts ADP. Residue glycine 211 participates in CDP binding. AMP-binding residues include alanine 212 and lysine 213. Alanine 212 contributes to the ATP binding site. Residue alanine 212 coordinates Mg(2+). Positions 215 and 216 each coordinate Mg(2+). Aspartate 216 provides a ligand contact to CDP. Lysine 217 lines the AMP pocket. Position 217 (lysine 217) interacts with ATP. Residue glycine 235 coordinates ADP. Position 235 (glycine 235) interacts with CDP. Glycine 236 is an AMP binding site. Residue glycine 236 participates in ATP binding. A phosphoserine mark is found at serine 253 and serine 260. At threonine 299 the chain carries Phosphothreonine. Glycine 310 contacts AMP. Glycine 310 is a binding site for ATP. Serine 328 is subject to Phosphoserine. The CDP site is built by glycine 335, alanine 337, and phenylalanine 340. Phenylalanine 340 serves as a coordination point for ADP. Glutamate 341 lines the AMP pocket. Glutamate 341 provides a ligand contact to ATP. Serine 351 is modified (phosphoserine). ATP contacts are provided by aspartate 372 and threonine 373. Aspartate 372 lines the Mg(2+) pocket. The residue at position 373 (threonine 373) is a Phosphothreonine. Residues serine 387, serine 390, serine 412, and serine 413 each carry the phosphoserine modification.

Belongs to the phosphoglycerate kinase family. In terms of assembly, monomer. Mg(2+) is required as a cofactor.

The protein localises to the cytoplasm. The protein resides in the mitochondrion. The enzyme catalyses (2R)-3-phosphoglycerate + ATP = (2R)-3-phospho-glyceroyl phosphate + ADP. The protein operates within carbohydrate degradation; glycolysis; pyruvate from D-glyceraldehyde 3-phosphate: step 2/5. Functionally, catalyzes one of the two ATP producing reactions in the glycolytic pathway via the reversible conversion of 1,3-diphosphoglycerate to 3-phosphoglycerate. Both L- and D- forms of purine and pyrimidine nucleotides can be used as substrates, but the activity is much lower on pyrimidines. Negatively regulates the biosynthesis of acetyl-CoA from pyruvate in the mitochondrion. This is Phosphoglycerate kinase (pgk1) from Schizosaccharomyces pombe (strain 972 / ATCC 24843) (Fission yeast).